The primary structure comprises 754 residues: 5-methyltetrahydropteroyltriglutamate--homocysteine methyltransferase (754 aa).

Residues Arg17–Lys20 and Lys117 contribute to the 5-methyltetrahydropteroyltri-L-glutamate site. L-homocysteine is bound by residues Ile431 to Ser433 and Glu484. L-methionine is bound by residues Ile431–Ser433 and Glu484. 5-methyltetrahydropteroyltri-L-glutamate-binding positions include Arg515–Cys516 and Trp561. Asp599 is a binding site for L-homocysteine. Asp599 is a binding site for L-methionine. Glu605 is a 5-methyltetrahydropteroyltri-L-glutamate binding site. Zn(2+) contacts are provided by His641, Cys643, and Glu665. Residue His694 is the Proton donor of the active site. Cys726 provides a ligand contact to Zn(2+).

This sequence belongs to the vitamin-B12 independent methionine synthase family. The cofactor is Zn(2+).

It catalyses the reaction 5-methyltetrahydropteroyltri-L-glutamate + L-homocysteine = tetrahydropteroyltri-L-glutamate + L-methionine. It functions in the pathway amino-acid biosynthesis; L-methionine biosynthesis via de novo pathway; L-methionine from L-homocysteine (MetE route): step 1/1. Catalyzes the transfer of a methyl group from 5-methyltetrahydrofolate to homocysteine resulting in methionine formation. The protein is 5-methyltetrahydropteroyltriglutamate--homocysteine methyltransferase of Salmonella typhimurium (strain LT2 / SGSC1412 / ATCC 700720).